Here is a 324-residue protein sequence, read N- to C-terminus: tRNA pseudouridine synthase B (324 aa).

Asp49 serves as the catalytic Nucleophile.

It belongs to the pseudouridine synthase TruB family. Type 1 subfamily.

It carries out the reaction uridine(55) in tRNA = pseudouridine(55) in tRNA. Functionally, responsible for synthesis of pseudouridine from uracil-55 in the psi GC loop of transfer RNAs. This Brucella anthropi (strain ATCC 49188 / DSM 6882 / CCUG 24695 / JCM 21032 / LMG 3331 / NBRC 15819 / NCTC 12168 / Alc 37) (Ochrobactrum anthropi) protein is tRNA pseudouridine synthase B.